A 298-amino-acid chain; its full sequence is L-xylulose reductase (298 aa).

Positions 19, 68, and 103 each coordinate NADP(+). Active-site proton donor residues include Ser-161, Ser-162, and Tyr-175. The NADP(+) site is built by Tyr-175, Lys-179, and Val-207. Lys-179 acts as the Lowers pKa of active site Tyr in catalysis.

It belongs to the short-chain dehydrogenases/reductases (SDR) family.

It carries out the reaction xylitol + NADP(+) = L-xylulose + NADPH + H(+). Its pathway is carbohydrate degradation; L-arabinose degradation via L-arabinitol; D-xylulose 5-phosphate from L-arabinose (fungal route): step 3/5. Its function is as follows. L-xylulose reductase involved in the catabolism of L-arabinose through an oxidoreductive pathway. Catalyzes the NADPH-dependent reduction of L-xylulose. In Aspergillus niger (strain ATCC 1015 / CBS 113.46 / FGSC A1144 / LSHB Ac4 / NCTC 3858a / NRRL 328 / USDA 3528.7), this protein is L-xylulose reductase.